The chain runs to 106 residues: Large ribosomal subunit protein uL23 (106 aa).

The protein belongs to the universal ribosomal protein uL23 family. As to quaternary structure, part of the 50S ribosomal subunit. Contacts protein L29, and trigger factor when it is bound to the ribosome.

In terms of biological role, one of the early assembly proteins it binds 23S rRNA. One of the proteins that surrounds the polypeptide exit tunnel on the outside of the ribosome. Forms the main docking site for trigger factor binding to the ribosome. In Neisseria meningitidis serogroup A / serotype 4A (strain DSM 15465 / Z2491), this protein is Large ribosomal subunit protein uL23.